A 173-amino-acid polypeptide reads, in one-letter code: Translation initiation factor IF-3 (173 aa).

It belongs to the IF-3 family. As to quaternary structure, monomer.

The protein localises to the cytoplasm. Its function is as follows. IF-3 binds to the 30S ribosomal subunit and shifts the equilibrium between 70S ribosomes and their 50S and 30S subunits in favor of the free subunits, thus enhancing the availability of 30S subunits on which protein synthesis initiation begins. This chain is Translation initiation factor IF-3, found in Bartonella bacilliformis (strain ATCC 35685 / KC583 / Herrer 020/F12,63).